The sequence spans 104 residues: MRPEKLDAAAIAEHLHKMEGWVLAEDGGSIWKTFRFKTFAEAFTFMTQCAFAAEKLNHHPEWFNVYNKVDVTLSTHDADGLTELDFKLAAKMDQAAEGRMPDHM.

It belongs to the pterin-4-alpha-carbinolamine dehydratase family.

The enzyme catalyses (4aS,6R)-4a-hydroxy-L-erythro-5,6,7,8-tetrahydrobiopterin = (6R)-L-erythro-6,7-dihydrobiopterin + H2O. The protein is Putative pterin-4-alpha-carbinolamine dehydratase (pcbD) of Rhizobium meliloti (strain 1021) (Ensifer meliloti).